Reading from the N-terminus, the 487-residue chain is Glutamyl-tRNA(Gln) amidotransferase subunit A (487 aa).

Active-site charge relay system residues include K76 and S151. S175 functions as the Acyl-ester intermediate in the catalytic mechanism.

The protein belongs to the amidase family. GatA subfamily. As to quaternary structure, heterotrimer of A, B and C subunits.

The enzyme catalyses L-glutamyl-tRNA(Gln) + L-glutamine + ATP + H2O = L-glutaminyl-tRNA(Gln) + L-glutamate + ADP + phosphate + H(+). Its function is as follows. Allows the formation of correctly charged Gln-tRNA(Gln) through the transamidation of misacylated Glu-tRNA(Gln) in organisms which lack glutaminyl-tRNA synthetase. The reaction takes place in the presence of glutamine and ATP through an activated gamma-phospho-Glu-tRNA(Gln). The protein is Glutamyl-tRNA(Gln) amidotransferase subunit A of Azoarcus sp. (strain BH72).